The following is a 470-amino-acid chain: MTPSSVTLNCSNCSHVLAPELNTVKAVVLGMVLGIFILFGVIGNILVILSVVCHRHLQTVTYYFIVNLAVADLLLSSTVLPFSAIFEILDRWVFGRVFCNIWAAVDVLCCTASIMSLCVISVDRYIGVSYPLRYPAIMTKRRALLAVMLLWVLSVIISIGPLFGWKEPAPEDETVCKITEEPGYAIFSAVGSFYLPLAIILAMYCRVYVVAQKESRGLKEGQKIEKSDSEQVILRMHRGNTTVSEDEALRSRTHFALRLLKFSREKKAAKTLGIVVGCFVLCWLPFFLVLPIGSIFPAYRPSDTVFKITFWLGYFNSCINPIIYLCSNQEFKKAFQSLLGVHCLRMTPRAHHHHLSVGQSQTQGHSLTISLDSKGAPCRLSPSSSVALSRTPSSRDSREWRVFSGGPINSGPGPTEAGRAKVAKLCNKSLHRTCCCILRARTPTQDPAPLGDLPTIKIHQLSLSEKGESV.

Residues 1-27 (MTPSSVTLNCSNCSHVLAPELNTVKAV) are Extracellular-facing. Asn9 and Asn12 each carry an N-linked (GlcNAc...) asparagine glycan. A helical membrane pass occupies residues 28–51 (VLGMVLGIFILFGVIGNILVILSV). Residues 52–64 (VCHRHLQTVTYYF) are Cytoplasmic-facing. The chain crosses the membrane as a helical span at residues 65 to 88 (IVNLAVADLLLSSTVLPFSAIFEI). Over 89–99 (LDRWVFGRVFC) the chain is Extracellular. A disulfide bridge links Cys99 with Cys176. A helical transmembrane segment spans residues 100-122 (NIWAAVDVLCCTASIMSLCVISV). At 123–143 (DRYIGVSYPLRYPAIMTKRRA) the chain is on the cytoplasmic side. A helical transmembrane segment spans residues 144–167 (LLAVMLLWVLSVIISIGPLFGWKE). Residues 168 to 181 (PAPEDETVCKITEE) lie on the Extracellular side of the membrane. The helical transmembrane segment at 182–205 (PGYAIFSAVGSFYLPLAIILAMYC) threads the bilayer. The Cytoplasmic segment spans residues 206-271 (RVYVVAQKES…FSREKKAAKT (66 aa)). Residues 272–295 (LGIVVGCFVLCWLPFFLVLPIGSI) traverse the membrane as a helical segment. The Extracellular portion of the chain corresponds to 296–303 (FPAYRPSD). The helical transmembrane segment at 304–327 (TVFKITFWLGYFNSCINPIIYLCS) threads the bilayer. Residues 328–470 (NQEFKKAFQS…LSLSEKGESV (143 aa)) are Cytoplasmic-facing. A lipid anchor (S-palmitoyl cysteine) is attached at Cys343. A disordered region spans residues 375–416 (GAPCRLSPSSSVALSRTPSSRDSREWRVFSGGPINSGPGPTE). Residues 381 to 392 (SPSSSVALSRTP) show a composition bias toward polar residues.

This sequence belongs to the G-protein coupled receptor 1 family. Adrenergic receptor subfamily. ADRA1A sub-subfamily.

It is found in the cell membrane. This alpha-adrenergic receptor mediates its action by association with G proteins that activate a phosphatidylinositol-calcium second messenger system. This Oryzias latipes (Japanese rice fish) protein is Alpha-1A adrenergic receptor (adra1a).